We begin with the raw amino-acid sequence, 368 residues long: Queuine tRNA-ribosyltransferase (368 aa).

The active-site Proton acceptor is the Asp-89. Residues 89–93 (DSGGF), Asp-143, and Gly-216 each bind substrate. Positions 247 to 253 (GVGKPED) are RNA binding. Asp-266 acts as the Nucleophile in catalysis. The RNA binding; important for wobble base 34 recognition stretch occupies residues 271-275 (TRNAR). Zn(2+)-binding residues include Cys-304, Cys-306, Cys-309, and His-335.

Belongs to the queuine tRNA-ribosyltransferase family. In terms of assembly, homodimer. Within each dimer, one monomer is responsible for RNA recognition and catalysis, while the other monomer binds to the replacement base PreQ1. Requires Zn(2+) as cofactor.

It carries out the reaction 7-aminomethyl-7-carbaguanine + guanosine(34) in tRNA = 7-aminomethyl-7-carbaguanosine(34) in tRNA + guanine. Its pathway is tRNA modification; tRNA-queuosine biosynthesis. Functionally, catalyzes the base-exchange of a guanine (G) residue with the queuine precursor 7-aminomethyl-7-deazaguanine (PreQ1) at position 34 (anticodon wobble position) in tRNAs with GU(N) anticodons (tRNA-Asp, -Asn, -His and -Tyr). Catalysis occurs through a double-displacement mechanism. The nucleophile active site attacks the C1' of nucleotide 34 to detach the guanine base from the RNA, forming a covalent enzyme-RNA intermediate. The proton acceptor active site deprotonates the incoming PreQ1, allowing a nucleophilic attack on the C1' of the ribose to form the product. After dissociation, two additional enzymatic reactions on the tRNA convert PreQ1 to queuine (Q), resulting in the hypermodified nucleoside queuosine (7-(((4,5-cis-dihydroxy-2-cyclopenten-1-yl)amino)methyl)-7-deazaguanosine). This chain is Queuine tRNA-ribosyltransferase, found in Buchnera aphidicola subsp. Schizaphis graminum (strain Sg).